We begin with the raw amino-acid sequence, 505 residues long: Cytochrome P450 9b2 (505 aa).

Cysteine 449 lines the heme pocket.

The protein belongs to the cytochrome P450 family. Heme is required as a cofactor.

It is found in the endoplasmic reticulum membrane. The protein resides in the microsome membrane. In terms of biological role, may be involved in the metabolism of insect hormones and in the breakdown of synthetic insecticides. The sequence is that of Cytochrome P450 9b2 (Cyp9b2) from Drosophila melanogaster (Fruit fly).